Consider the following 263-residue polypeptide: 3-methyl-2-oxobutanoate hydroxymethyltransferase (263 aa).

Residues D45 and D84 each coordinate Mg(2+). 3-methyl-2-oxobutanoate-binding positions include 45 to 46 (DS), D84, and K112. Residue E114 participates in Mg(2+) binding. E180 functions as the Proton acceptor in the catalytic mechanism.

The protein belongs to the PanB family. Homodecamer; pentamer of dimers. Requires Mg(2+) as cofactor.

It localises to the cytoplasm. The enzyme catalyses 3-methyl-2-oxobutanoate + (6R)-5,10-methylene-5,6,7,8-tetrahydrofolate + H2O = 2-dehydropantoate + (6S)-5,6,7,8-tetrahydrofolate. Its pathway is cofactor biosynthesis; (R)-pantothenate biosynthesis; (R)-pantoate from 3-methyl-2-oxobutanoate: step 1/2. Functionally, catalyzes the reversible reaction in which hydroxymethyl group from 5,10-methylenetetrahydrofolate is transferred onto alpha-ketoisovalerate to form ketopantoate. The sequence is that of 3-methyl-2-oxobutanoate hydroxymethyltransferase from Salmonella paratyphi C (strain RKS4594).